The chain runs to 429 residues: D-amino acid dehydrogenase (429 aa).

An FAD-binding site is contributed by 3-17; the sequence is VLILGSGVIGTTTAW.

This sequence belongs to the DadA oxidoreductase family. Requires FAD as cofactor.

The catalysed reaction is a D-alpha-amino acid + A + H2O = a 2-oxocarboxylate + AH2 + NH4(+). The protein operates within amino-acid degradation; D-alanine degradation; NH(3) and pyruvate from D-alanine: step 1/1. Its function is as follows. Oxidative deamination of D-amino acids. In Xanthomonas campestris pv. campestris (strain B100), this protein is D-amino acid dehydrogenase.